A 240-amino-acid chain; its full sequence is SURF1-like protein (240 aa).

A run of 2 helical transmembrane segments spans residues 7-23 (VFITFTILISLGFWQLS) and 201-219 (YALTWFGLAISLIVIYVIY).

Belongs to the SURF1 family.

The protein localises to the cell membrane. The polypeptide is SURF1-like protein (Rickettsia conorii (strain ATCC VR-613 / Malish 7)).